Consider the following 213-residue polypeptide: Putative thiamine-phosphate synthase (213 aa).

4-amino-2-methyl-5-(diphosphooxymethyl)pyrimidine-binding positions include 38 to 42 (QLREK) and Asn70. Asp71 provides a ligand contact to Mg(2+). Ser109 serves as a coordination point for 4-amino-2-methyl-5-(diphosphooxymethyl)pyrimidine. 135 to 137 (TPS) is a 2-[(2R,5Z)-2-carboxy-4-methylthiazol-5(2H)-ylidene]ethyl phosphate binding site. A 4-amino-2-methyl-5-(diphosphooxymethyl)pyrimidine-binding site is contributed by Lys138. 2-[(2R,5Z)-2-carboxy-4-methylthiazol-5(2H)-ylidene]ethyl phosphate contacts are provided by residues Gly166 and 186 to 187 (IS).

It belongs to the thiamine-phosphate synthase family. The cofactor is Mg(2+).

It catalyses the reaction 2-[(2R,5Z)-2-carboxy-4-methylthiazol-5(2H)-ylidene]ethyl phosphate + 4-amino-2-methyl-5-(diphosphooxymethyl)pyrimidine + 2 H(+) = thiamine phosphate + CO2 + diphosphate. The enzyme catalyses 2-(2-carboxy-4-methylthiazol-5-yl)ethyl phosphate + 4-amino-2-methyl-5-(diphosphooxymethyl)pyrimidine + 2 H(+) = thiamine phosphate + CO2 + diphosphate. It carries out the reaction 4-methyl-5-(2-phosphooxyethyl)-thiazole + 4-amino-2-methyl-5-(diphosphooxymethyl)pyrimidine + H(+) = thiamine phosphate + diphosphate. The protein operates within cofactor biosynthesis; thiamine diphosphate biosynthesis; thiamine phosphate from 4-amino-2-methyl-5-diphosphomethylpyrimidine and 4-methyl-5-(2-phosphoethyl)-thiazole: step 1/1. Its function is as follows. Condenses 4-methyl-5-(beta-hydroxyethyl)thiazole monophosphate (THZ-P) and 2-methyl-4-amino-5-hydroxymethyl pyrimidine pyrophosphate (HMP-PP) to form thiamine monophosphate (TMP). This Geobacter sulfurreducens (strain ATCC 51573 / DSM 12127 / PCA) protein is Putative thiamine-phosphate synthase (thiE).